The chain runs to 372 residues: Putative 26S proteasome regulatory subunit homolog MTH_1011 (372 aa).

An ATP-binding site is contributed by 164 to 171 (GSPGTGKT).

Belongs to the AAA ATPase family.

Its function is as follows. The 26S proteasome is involved in the ATP-dependent degradation of ubiquitinated proteins. The regulatory (or ATPase) complex confers ATP dependency and substrate specificity to the 26S complex. This Methanothermobacter thermautotrophicus (strain ATCC 29096 / DSM 1053 / JCM 10044 / NBRC 100330 / Delta H) (Methanobacterium thermoautotrophicum) protein is Putative 26S proteasome regulatory subunit homolog MTH_1011.